The primary structure comprises 502 residues: Putative diacyglycerol O-acyltransferase MT1809 (502 aa).

The active-site Proton acceptor is the His174.

The protein belongs to the long-chain O-acyltransferase family.

It carries out the reaction an acyl-CoA + a 1,2-diacyl-sn-glycerol = a triacyl-sn-glycerol + CoA. It participates in glycerolipid metabolism; triacylglycerol biosynthesis. This is Putative diacyglycerol O-acyltransferase MT1809 from Mycobacterium tuberculosis (strain CDC 1551 / Oshkosh).